The sequence spans 276 residues: Protein SCO1 homolog 2, mitochondrial (276 aa).

The N-terminal 14 residues, 1–14, are a transit peptide targeting the mitochondrion; that stretch reads MLPCRRLVLSCKNQ. The chain crosses the membrane as a helical span at residues 66–82; the sequence is YAVPAILLGFAGFVGFL. The Thioredoxin domain maps to 110–273; that stretch reads VKGPIIGGPF…SQELLKEVAS (164 aa).

It belongs to the SCO1/2 family. As to expression, expressed in the whole plant with highest expression in imbibed seeds and embryos, and the root hair zone.

The protein localises to the mitochondrion inner membrane. Thought to play a role in cellular copper homeostasis, mitochondrial redox signaling or insertion of copper into the active site of COX. Participates in copper and redox homeostasis. This is Protein SCO1 homolog 2, mitochondrial (HCC2) from Arabidopsis thaliana (Mouse-ear cress).